The following is a 315-amino-acid chain: THO complex subunit 3 (315 aa).

6 WD repeats span residues 18–57 (GHKKKVHSVAWNSNGTKLASGSVDQTARIWNIEPHGHSKA), 64–104 (GHTD…CTQQ), 106–145 (ELSGENINITYKPDGTHVAVGNRDDELTILDVRKFKPLHR), 189–228 (AHTAGCYCIAIDPKGRYFAVGSADSLVSLWDISDMLCLRT), 231–270 (KLEWPVRTISFNYSGEYIASASEDLFIDIANVQTGRTVHQ), and 272–311 (PCRAAMNSVEWNPKYNLLAYAGDDKNPKYNTDEGVFRIFG).

Belongs to the THOC3 family. In terms of assembly, component of the THO complex, which is composed of THO1, THO2, THO3, THO5, THO6 and THO7.

Its subcellular location is the nucleus. Functionally, acts as a component of the THO subcomplex of the TREX complex which is thought to couple mRNA transcription, processing and nuclear export. Contributes to the integrity of the endogenous trans-acting small interfering RNA (ta-siRNA) pathway. May process or transport a long RNA molecule so that it can be a template for secondary siRNA production. May participate in the trafficking of siRNA precursors to the ARGONAUTE catalytic center. Required for the generation of functional messenger ribonucleoproteins (mRNPs). The sequence is that of THO complex subunit 3 (THO3) from Arabidopsis thaliana (Mouse-ear cress).